Consider the following 66-residue polypeptide: COP-associated protein (66 aa).

One can recognise an HMA domain in the interval 1–66; it reads MKIDIPVKGM…AILDAGYELG (66 aa). Cu cation contacts are provided by Cys-12 and Cys-15.

In terms of biological role, part of a cation-transporting system which is associated with copper export out of the H.pylori cells. The chain is COP-associated protein (copP) from Helicobacter felis (strain ATCC 49179 / CCUG 28539 / NCTC 12436 / CS1).